A 434-amino-acid polypeptide reads, in one-letter code: Mitochondrial distribution and morphology protein 10 (434 aa).

It belongs to the MDM10 family. In terms of assembly, component of the ER-mitochondria encounter structure (ERMES) or MDM complex, composed of mmm1, mdm10, mdm12 and mdm34. Associates with the mitochondrial outer membrane sorting assembly machinery SAM(core) complex.

It is found in the mitochondrion outer membrane. Its function is as follows. Component of the ERMES/MDM complex, which serves as a molecular tether to connect the endoplasmic reticulum and mitochondria. Components of this complex are involved in the control of mitochondrial shape and protein biogenesis and may function in phospholipid exchange. mdm10 is involved in the late assembly steps of the general translocase of the mitochondrial outer membrane (TOM complex). Functions in the tom40-specific route of the assembly of outer membrane beta-barrel proteins, including the association of tom40 with the receptor tom22 and small TOM proteins. Can associate with the SAM(core) complex as well as the mdm12-mmm1 complex, both involved in late steps of the major beta-barrel assembly pathway, that is responsible for biogenesis of all outer membrane beta-barrel proteins. May act as a switch that shuttles between both complexes and channels precursor proteins into the tom40-specific pathway. Plays a role in mitochondrial morphology and in the inheritance of mitochondria. This is Mitochondrial distribution and morphology protein 10 (mdmB) from Aspergillus niger (strain ATCC MYA-4892 / CBS 513.88 / FGSC A1513).